A 121-amino-acid chain; its full sequence is UPF0102 protein Xfasm12_1748 (121 aa).

The protein belongs to the UPF0102 family.

This Xylella fastidiosa (strain M12) protein is UPF0102 protein Xfasm12_1748.